The primary structure comprises 436 residues: Serine hydroxymethyltransferase (436 aa).

(6S)-5,6,7,8-tetrahydrofolate contacts are provided by residues Leu133 and 137 to 139 (GHL). N6-(pyridoxal phosphate)lysine is present on Lys242. Residue 366–368 (SPF) participates in (6S)-5,6,7,8-tetrahydrofolate binding.

The protein belongs to the SHMT family. Homodimer. The cofactor is pyridoxal 5'-phosphate.

It is found in the cytoplasm. It catalyses the reaction (6R)-5,10-methylene-5,6,7,8-tetrahydrofolate + glycine + H2O = (6S)-5,6,7,8-tetrahydrofolate + L-serine. The protein operates within one-carbon metabolism; tetrahydrofolate interconversion. Its pathway is amino-acid biosynthesis; glycine biosynthesis; glycine from L-serine: step 1/1. In terms of biological role, catalyzes the reversible interconversion of serine and glycine with tetrahydrofolate (THF) serving as the one-carbon carrier. This reaction serves as the major source of one-carbon groups required for the biosynthesis of purines, thymidylate, methionine, and other important biomolecules. Also exhibits THF-independent aldolase activity toward beta-hydroxyamino acids, producing glycine and aldehydes, via a retro-aldol mechanism. The sequence is that of Serine hydroxymethyltransferase from Novosphingobium aromaticivorans (strain ATCC 700278 / DSM 12444 / CCUG 56034 / CIP 105152 / NBRC 16084 / F199).